The following is a 294-amino-acid chain: 4-diphosphocytidyl-2-C-methyl-D-erythritol kinase (294 aa).

The active site involves K23. Residue 106–116 (PMGGGLGGGSS) coordinates ATP. D148 is a catalytic residue.

Belongs to the GHMP kinase family. IspE subfamily.

It catalyses the reaction 4-CDP-2-C-methyl-D-erythritol + ATP = 4-CDP-2-C-methyl-D-erythritol 2-phosphate + ADP + H(+). The protein operates within isoprenoid biosynthesis; isopentenyl diphosphate biosynthesis via DXP pathway; isopentenyl diphosphate from 1-deoxy-D-xylulose 5-phosphate: step 3/6. Catalyzes the phosphorylation of the position 2 hydroxy group of 4-diphosphocytidyl-2C-methyl-D-erythritol. This is 4-diphosphocytidyl-2-C-methyl-D-erythritol kinase from Nitrosospira multiformis (strain ATCC 25196 / NCIMB 11849 / C 71).